We begin with the raw amino-acid sequence, 362 residues long: MSVILAIFIAAAGCLFSSWRIYWSPWACFPGPKLAALSSWYEWYWEVYRKGQLNAHLQDLHASYGPVVRYGPKHVHFNDPALYRDVYKWHPSFGKDPAFYGAPKYSSTFRETNISKHAARRQVLSRRFSPAVVRQRMPVIERHCEHLWQKLDRLTQAGRKNFNFFNLCRSFAADLLSTYMSGTTFGCMDDDEQGFDGNFIRAIQHTSDTYFDNRNIFLARWTSLLKMFGYGPPPLDKMLDELTFSDGLVEDYLSAKDSKGKEDTVFAILTQPGAVKDFSPLSKPELMAEGRSLLAAGVNTVGFTLSSTLFYIARDEDVQLRLQTELDTSTPQQTLASLPYMVGNLSIFILSDRLTLYTRPPV.

The chain crosses the membrane as a helical span at residues Val3–Trp23.

It belongs to the cytochrome P450 family.

Its subcellular location is the membrane. It functions in the pathway secondary metabolite biosynthesis. Functionally, cytochrome P450 monooxygenase-like protein; part of the cluster that mediates the biosynthesis of a highly modified cyclo-arginine-tryptophan dipeptide (cRW). The first step of the pathway is perfornmed by the arginine-containing cyclodipeptide synthase (RCPDS) avaA that acts as the scaffold-generating enzyme and is responsible for formation of the cyclo-Arg-Trp (cRW) diketopiperazine. AvaB then acts as a multifunctional flavoenzyme that is responsible for generating the cyclo-Arg-formylkynurenine DKP, which can be deformylated by avaC. AvaB then further catalyzes an additional N-oxidation followed by cyclization and dehydration. The next step is an N-acetylation of the guanidine group catalyzed by the arginine N-acetyltransferase avaD. The roles of the additional enzymes identified within the ava cluster still have to be determined. This chain is Cytochrome P450 monooxygenase-like protein avaN, found in Aspergillus versicolor.